The sequence spans 643 residues: Methyl-accepting chemotaxis protein McpA (643 aa).

The chain crosses the membrane as a helical span at residues 24–44; that stretch reads ILLSACGVVVLAFALFTLYND. The 225-residue stretch at 49–273 folds into the Cache domain; the sequence is NTIRQNIEAS…GLPSAQWYIG (225 aa). A helical membrane pass occupies residues 293–313; the sequence is IIAMLIAVAAIAGLLGLLIPV. Residues 312–366 enclose the HAMP domain; it reads PVLMSPLTTMGRAMRDIAEGEGDLTRRLAVQNKDEFGELATSFNRFVERIHASIS. One can recognise a Methyl-accepting transducer domain in the interval 371-607; it reads ATRLVHDLSE…SLNLDITQIN (237 aa).

It belongs to the methyl-accepting chemotaxis (MCP) protein family.

The protein localises to the cell membrane. Its function is as follows. Chemotactic-signal transducers respond to changes in the concentration of attractants and repellents in the environment, transduce a signal from the outside to the inside of the cell, and facilitate sensory adaptation through the variation of the level of methylation. McpA is a chemoreceptor that binds to 12 different L-amino acids and mediates chemotaxis toward these amino acids. This Pseudomonas putida (strain ATCC 47054 / DSM 6125 / CFBP 8728 / NCIMB 11950 / KT2440) protein is Methyl-accepting chemotaxis protein McpA.